The primary structure comprises 90 residues: Nodulation protein F (90 aa).

The Carrier domain maps to 4 to 89 (QLESEIIGII…RHSGSHPRLA (86 aa)). Ser-46 carries the O-(pantetheine 4'-phosphoryl)serine modification. Positions 65–90 (RDEHGRGVVGSPERRRHSGSHPRLAH) are disordered. The span at 78–90 (RRRHSGSHPRLAH) shows a compositional bias: basic residues.

4'-phosphopantetheine is transferred from CoA to a specific serine of apo-NodF.

Proposed to synthesize nod factor fatty acyl chain. Involved in trans-2,trans-4,trans-6,cis-11-octadecatetraenoic acid biosynthesis. This chain is Nodulation protein F (nodF), found in Rhizobium meliloti (Ensifer meliloti).